The following is a 70-amino-acid chain: Conotoxin Lt3.4 (70 aa).

The first 24 residues, 1–24, serve as a signal peptide directing secretion; sequence MLKMGVLLFTFLVLFPLAMFQLDA. The propeptide occupies 25-54; it reads DQPVERYAENKQDLNRDERMKIMLSALRQR. At Gln-55 the chain carries Pyrrolidone carboxylic acid. Intrachain disulfides connect Cys-56-Cys-68, Cys-57-Cys-66, and Cys-62-Cys-69.

Belongs to the conotoxin M superfamily. In terms of tissue distribution, expressed by the venom duct.

Its subcellular location is the secreted. This Conus litteratus (Lettered cone) protein is Conotoxin Lt3.4.